Reading from the N-terminus, the 144-residue chain is Signal recognition particle 19 kDa protein (144 aa).

The segment at 117–144 (TRTQKTGGGDQSLQQGEGSKKGKGKKKK) is disordered.

This sequence belongs to the SRP19 family. As to quaternary structure, component of a signal recognition particle complex that consists of a 7SL RNA molecule of 300 nucleotides and six protein subunits: SRP72, SRP68, SRP54, SRP19, SRP14 and SRP9. Interacts with IPO5, IPO7, IPO8, KPNB1 and TNPO1. Interactions with IPO8 and TNPO1 may be involved in SRP19 import into the nucleus.

Its subcellular location is the cytoplasm. The protein resides in the nucleus. It localises to the nucleolus. The protein localises to the nucleoplasm. In terms of biological role, component of the signal recognition particle (SRP) complex, a ribonucleoprotein complex that mediates the cotranslational targeting of secretory and membrane proteins to the endoplasmic reticulum (ER). Binds directly to 7SL RNA. Mediates binding of SRP54 to the SRP complex. In Canis lupus familiaris (Dog), this protein is Signal recognition particle 19 kDa protein.